We begin with the raw amino-acid sequence, 481 residues long: Ras-GEF domain-containing family member 1A (481 aa).

The 130-residue stretch at 41–170 (QDGHLISGSL…AIAQMTQSLL (130 aa)) folds into the N-terminal Ras-GEF domain. Residues 214-461 (DPLVLAQQLT…FVASFESEGP (248 aa)) enclose the Ras-GEF domain.

In terms of tissue distribution, detected in brain and spinal cord. Highly expressed in a number of intrahepatic cholangiocarcinoma tissue biopsies.

Its function is as follows. Guanine nucleotide exchange factor (GEF) with specificity for RAP2A, KRAS, HRAS, and NRAS (in vitro). Plays a role in cell migration. The protein is Ras-GEF domain-containing family member 1A (RASGEF1A) of Homo sapiens (Human).